Reading from the N-terminus, the 191-residue chain is Glycerol-3-phosphate acyltransferase (191 aa).

The next 6 helical transmembrane spans lie at 7–27, 51–71, 80–100, 115–135, 139–159, and 161–181; these read ILVL…SYIG, KLAV…VMLA, FVFM…WLSF, FIEY…FVIF, SLSS…HYSA, and ESIT…ENIV.

Belongs to the PlsY family. As to quaternary structure, probably interacts with PlsX.

It localises to the cell inner membrane. The catalysed reaction is an acyl phosphate + sn-glycerol 3-phosphate = a 1-acyl-sn-glycero-3-phosphate + phosphate. The protein operates within lipid metabolism; phospholipid metabolism. In terms of biological role, catalyzes the transfer of an acyl group from acyl-phosphate (acyl-PO(4)) to glycerol-3-phosphate (G3P) to form lysophosphatidic acid (LPA). This enzyme utilizes acyl-phosphate as fatty acyl donor, but not acyl-CoA or acyl-ACP. The polypeptide is Glycerol-3-phosphate acyltransferase (Ehrlichia canis (strain Jake)).